An 833-amino-acid chain; its full sequence is Leucine--tRNA ligase (833 aa).

The short motif at proline 41–histidine 52 is the 'HIGH' region element. Positions lysine 610–serine 614 match the 'KMSKS' region motif. Residue lysine 613 participates in ATP binding.

This sequence belongs to the class-I aminoacyl-tRNA synthetase family.

The protein localises to the cytoplasm. The enzyme catalyses tRNA(Leu) + L-leucine + ATP = L-leucyl-tRNA(Leu) + AMP + diphosphate. The sequence is that of Leucine--tRNA ligase from Streptococcus agalactiae serotype Ia (strain ATCC 27591 / A909 / CDC SS700).